The primary structure comprises 456 residues: Dothistromin biosynthesis regulatory protein aflJ (456 aa).

The HTH iclR-type domain maps to 74-143 (LARENQLLAC…PKPGYVAHSG (70 aa)). Positions 104-123 (YSDVADLACVPVDQLRRIAR) form a DNA-binding region, H-T-H motif. Residues 290–300 (KLHNGLSTPPE) are compositionally biased toward polar residues. The disordered stretch occupies residues 290–314 (KLHNGLSTPPESDTGPAARAAKASE).

It is found in the nucleus. In terms of biological role, transcription coactivator involved in regulation of the dothistromin biosynthesis gene cluster with aflR. This chain is Dothistromin biosynthesis regulatory protein aflJ, found in Dothistroma septosporum (strain NZE10 / CBS 128990) (Red band needle blight fungus).